Here is a 333-residue protein sequence, read N- to C-terminus: Large ribosomal subunit protein uL3 (333 aa).

Belongs to the universal ribosomal protein uL3 family. As to quaternary structure, part of the 50S ribosomal subunit. Forms a cluster with proteins L14 and L24e.

One of the primary rRNA binding proteins, it binds directly near the 3'-end of the 23S rRNA, where it nucleates assembly of the 50S subunit. The polypeptide is Large ribosomal subunit protein uL3 (Methanocorpusculum labreanum (strain ATCC 43576 / DSM 4855 / Z)).